Consider the following 76-residue polypeptide: Sec-independent protein translocase protein TatA (76 aa).

The chain crosses the membrane as a helical span at residues 1–21; sequence MGGLSIWHWLIVLLIVALVFG. Residues 43–76 are disordered; sequence MKDGDAPADAQQLPRSGTVDVNAKEATRSDSNKA. Over residues 64 to 76 the composition is skewed to basic and acidic residues; sequence NAKEATRSDSNKA.

It belongs to the TatA/E family. In terms of assembly, the Tat system comprises two distinct complexes: a TatABC complex, containing multiple copies of TatA, TatB and TatC subunits, and a separate TatA complex, containing only TatA subunits. Substrates initially bind to the TatABC complex, which probably triggers association of the separate TatA complex to form the active translocon.

It localises to the cell inner membrane. Its function is as follows. Part of the twin-arginine translocation (Tat) system that transports large folded proteins containing a characteristic twin-arginine motif in their signal peptide across membranes. TatA could form the protein-conducting channel of the Tat system. The polypeptide is Sec-independent protein translocase protein TatA (Burkholderia multivorans (strain ATCC 17616 / 249)).